The chain runs to 135 residues: Surface presentation of antigens protein SpaK (135 aa).

The protein belongs to the SpaK family.

Involved in a secretory pathway responsible for the surface presentation of determinants needed for the entry of Salmonella species into mammalian cells. The protein is Surface presentation of antigens protein SpaK (spaK) of Salmonella typhi.